We begin with the raw amino-acid sequence, 326 residues long: tRNA-modifying protein YgfZ (326 aa).

2 residues coordinate folate: tryptophan 27 and tryptophan 189.

This sequence belongs to the tRNA-modifying YgfZ family.

The protein resides in the cytoplasm. Folate-binding protein involved in regulating the level of ATP-DnaA and in the modification of some tRNAs. It is probably a key factor in regulatory networks that act via tRNA modification, such as initiation of chromosomal replication. This chain is tRNA-modifying protein YgfZ, found in Escherichia coli (strain SE11).